The following is an 827-amino-acid chain: Villin-1 (827 aa).

Positions 1–126 (MTKLSAQVKG…IRKGGVASGM (126 aa)) are necessary for homodimerization. The tract at residues 1–734 (MTKLSAQVKG…YEDLKAELGN (734 aa)) is core. One copy of the Gelsolin-like 1 repeat lies at 27-76 (MQMVPVPSNSFGSFFDGDCYVIQAIHKTGSNLSYDIHYWIGQASSQDEQG). 2 LPA/PIP2-binding site regions span residues 112–119 (KKGIVIRK) and 138–146 (RLLHVKGKR). 2 Gelsolin-like repeats span residues 148–188 (VVAG…MERL) and 265–309 (VVVR…QEKK). Serine 366 carries the post-translational modification Phosphoserine. Gelsolin-like repeat units lie at residues 407-457 (NLEL…DEIT), 528-568 (TKAF…DERE), and 631-672 (FLAT…DEKK). Serine 735 carries the post-translational modification Phosphoserine. Residues 735-827 (SGDWSQITAE…QNLKKEKGLF (93 aa)) form a headpiece region. The region spanning 761 to 827 (SGPLPIFPLE…QNLKKEKGLF (67 aa)) is the HP domain. Residues 816-824 (KQQNLKKEK) form an LPA/PIP2-binding site 3 region.

Belongs to the villin/gelsolin family. In terms of assembly, monomer. Homodimer; homodimerization is necessary for actin-bundling. Associates with F-actin; phosphorylation at tyrosine residues decreases the association with F-actin. Interacts (phosphorylated at C-terminus tyrosine phosphorylation sites) with PLCG1 (via the SH2 domains). Interacts (phosphorylated form) with PLCG1; the interaction is enhanced by hepatocyte growth factor (HGF). Phosphorylated on tyrosine residues by SRC. The unphosphorylated form increases the initial rate of actin-nucleating activity, whereas the tyrosine-phosphorylated form inhibits actin-nucleating activity, enhances actin-bundling activity and enhances actin-severing activity by reducing high Ca(2+) requirements. The tyrosine-phosphorylated form does not regulate actin-capping activity. Tyrosine phosphorylation is essential for cell migration: tyrosine phosphorylation sites in the N-terminus half regulate actin reorganization and cell morphology, whereas tyrosine phosphorylation sites in the C-terminus half regulate cell migration via interaction with PLCG1. Tyrosine phosphorylation is induced by epidermal growth factor (EGF) and stimulates cell migration.

It localises to the cytoplasm. It is found in the cytoskeleton. The protein localises to the cell projection. The protein resides in the lamellipodium. Its subcellular location is the ruffle. It localises to the microvillus. It is found in the filopodium tip. The protein localises to the filopodium. Its function is as follows. Epithelial cell-specific Ca(2+)-regulated actin-modifying protein that modulates the reorganization of microvillar actin filaments. Plays a role in the actin nucleation, actin filament bundle assembly, actin filament capping and severing. Binds phosphatidylinositol 4,5-bisphosphate (PIP2) and lysophosphatidic acid (LPA); binds LPA with higher affinity than PIP2. Binding to LPA increases its phosphorylation by SRC and inhibits all actin-modifying activities. Binding to PIP2 inhibits actin-capping and -severing activities but enhances actin-bundling activity. Regulates the intestinal epithelial cell morphology, cell invasion, cell migration and apoptosis. Protects against apoptosis induced by dextran sodium sulfate (DSS) in the gastrointestinal epithelium. Appears to regulate cell death by maintaining mitochondrial integrity. Enhances hepatocyte growth factor (HGF)-induced epithelial cell motility, chemotaxis and wound repair. This Bos taurus (Bovine) protein is Villin-1 (VIL1).